An 87-amino-acid polypeptide reads, in one-letter code: Small ribosomal subunit protein bS20 (87 aa).

The interval 1–25 is disordered; that stretch reads MANTAQARKRARQSVQRNKHNSSLR. A compositionally biased stretch (basic residues) spans 7-22; the sequence is ARKRARQSVQRNKHNS.

The protein belongs to the bacterial ribosomal protein bS20 family.

Functionally, binds directly to 16S ribosomal RNA. The protein is Small ribosomal subunit protein bS20 of Bordetella bronchiseptica (strain ATCC BAA-588 / NCTC 13252 / RB50) (Alcaligenes bronchisepticus).